The following is a 137-amino-acid chain: Large ribosomal subunit protein uL16 (137 aa).

A compositionally biased stretch (basic residues) spans 1-17; it reads MLQPKRTKFRKQMKGRN. The interval 1-22 is disordered; it reads MLQPKRTKFRKQMKGRNRGLAQ.

The protein belongs to the universal ribosomal protein uL16 family. In terms of assembly, part of the 50S ribosomal subunit.

In terms of biological role, binds 23S rRNA and is also seen to make contacts with the A and possibly P site tRNAs. The polypeptide is Large ribosomal subunit protein uL16 (Teredinibacter turnerae (strain ATCC 39867 / T7901)).